Here is a 138-residue protein sequence, read N- to C-terminus: ATP synthase epsilon chain (138 aa).

The protein belongs to the ATPase epsilon chain family. F-type ATPases have 2 components, CF(1) - the catalytic core - and CF(0) - the membrane proton channel. CF(1) has five subunits: alpha(3), beta(3), gamma(1), delta(1), epsilon(1). CF(0) has three main subunits: a, b and c.

It is found in the cell inner membrane. Produces ATP from ADP in the presence of a proton gradient across the membrane. This chain is ATP synthase epsilon chain, found in Delftia acidovorans (strain DSM 14801 / SPH-1).